Here is a 467-residue protein sequence, read N- to C-terminus: Venom serine carboxypeptidase (467 aa).

A signal peptide spans 1-18 (MKKLVLLQFLFFISFARG). N-linked (GlcNAc...) asparagine glycosylation is found at asparagine 130 and asparagine 169. Serine 202 is a catalytic residue. Residues asparagine 304, asparagine 322, and asparagine 344 are each glycosylated (N-linked (GlcNAc...) asparagine). Active-site residues include aspartate 387 and histidine 444.

Belongs to the peptidase S10 family. In terms of tissue distribution, expressed by the venom duct.

The protein resides in the secreted. The catalysed reaction is Release of a C-terminal amino acid with broad specificity.. The sequence is that of Venom serine carboxypeptidase from Apis mellifera (Honeybee).